The following is a 559-amino-acid chain: Dihydroxy-acid dehydratase (559 aa).

A Mg(2+)-binding site is contributed by aspartate 81. Cysteine 122 provides a ligand contact to [2Fe-2S] cluster. Positions 123 and 124 each coordinate Mg(2+). Lysine 124 carries the N6-carboxylysine modification. Residue cysteine 195 participates in [2Fe-2S] cluster binding. Glutamate 448 provides a ligand contact to Mg(2+). Serine 474 acts as the Proton acceptor in catalysis.

This sequence belongs to the IlvD/Edd family. In terms of assembly, homodimer. [2Fe-2S] cluster serves as cofactor. It depends on Mg(2+) as a cofactor.

It catalyses the reaction (2R)-2,3-dihydroxy-3-methylbutanoate = 3-methyl-2-oxobutanoate + H2O. The catalysed reaction is (2R,3R)-2,3-dihydroxy-3-methylpentanoate = (S)-3-methyl-2-oxopentanoate + H2O. Its pathway is amino-acid biosynthesis; L-isoleucine biosynthesis; L-isoleucine from 2-oxobutanoate: step 3/4. It participates in amino-acid biosynthesis; L-valine biosynthesis; L-valine from pyruvate: step 3/4. Its function is as follows. Functions in the biosynthesis of branched-chain amino acids. Catalyzes the dehydration of (2R,3R)-2,3-dihydroxy-3-methylpentanoate (2,3-dihydroxy-3-methylvalerate) into 2-oxo-3-methylpentanoate (2-oxo-3-methylvalerate) and of (2R)-2,3-dihydroxy-3-methylbutanoate (2,3-dihydroxyisovalerate) into 2-oxo-3-methylbutanoate (2-oxoisovalerate), the penultimate precursor to L-isoleucine and L-valine, respectively. In Geobacillus kaustophilus (strain HTA426), this protein is Dihydroxy-acid dehydratase.